The chain runs to 683 residues: DNA ligase (683 aa).

NAD(+)-binding positions include 43–47 (DAEYD), 92–93 (SL), and E125. K127 (N6-AMP-lysine intermediate) is an active-site residue. The NAD(+) site is built by R148, E185, K303, and K327. Zn(2+) is bound by residues C421, C424, C439, and C445. Positions 604–683 (IADNPLKGKN…QEFIALTGEN (80 aa)) constitute a BRCT domain.

This sequence belongs to the NAD-dependent DNA ligase family. LigA subfamily. Requires Mg(2+) as cofactor. The cofactor is Mn(2+).

The catalysed reaction is NAD(+) + (deoxyribonucleotide)n-3'-hydroxyl + 5'-phospho-(deoxyribonucleotide)m = (deoxyribonucleotide)n+m + AMP + beta-nicotinamide D-nucleotide.. In terms of biological role, DNA ligase that catalyzes the formation of phosphodiester linkages between 5'-phosphoryl and 3'-hydroxyl groups in double-stranded DNA using NAD as a coenzyme and as the energy source for the reaction. It is essential for DNA replication and repair of damaged DNA. This Actinobacillus pleuropneumoniae serotype 5b (strain L20) protein is DNA ligase.